The chain runs to 97 residues: DNA-directed RNA polymerase subunit omega (97 aa).

It belongs to the RNA polymerase subunit omega family. In terms of assembly, the RNAP catalytic core consists of 2 alpha, 1 beta, 1 beta' and 1 omega subunit. When a sigma factor is associated with the core the holoenzyme is formed, which can initiate transcription.

It carries out the reaction RNA(n) + a ribonucleoside 5'-triphosphate = RNA(n+1) + diphosphate. Its function is as follows. Promotes RNA polymerase assembly. Latches the N- and C-terminal regions of the beta' subunit thereby facilitating its interaction with the beta and alpha subunits. In Coxiella burnetii (strain CbuK_Q154) (Coxiella burnetii (strain Q154)), this protein is DNA-directed RNA polymerase subunit omega.